We begin with the raw amino-acid sequence, 124 residues long: Large ribosomal subunit protein bL17 (124 aa).

The protein belongs to the bacterial ribosomal protein bL17 family. Part of the 50S ribosomal subunit. Contacts protein L32.

This is Large ribosomal subunit protein bL17 from Persephonella marina (strain DSM 14350 / EX-H1).